The following is a 127-amino-acid chain: uncharacterized protein (127 aa).

Residues Met-1–Ser-16 form the signal peptide. Cys-17 carries the N-palmitoyl cysteine lipid modification. The S-diacylglycerol cysteine moiety is linked to residue Cys-17. Positions Glu-56–Ser-101 form a coiled coil. The span at Val-107–Ser-118 shows a compositional bias: polar residues. The tract at residues Val-107–Lys-127 is disordered.

Its subcellular location is the cell membrane. This is an uncharacterized protein from Rickettsia conorii (strain ATCC VR-613 / Malish 7).